A 501-amino-acid chain; its full sequence is Cilia- and flagella-associated protein 45 (501 aa).

A coiled-coil region spans residues 75-114 (MTAEDVAAAKREAEAKREQLQAVSKARKEKMLKLEEEAKK).

Belongs to the CFAP45 family.

The protein resides in the cell projection. It is found in the cilium. It localises to the flagellum. The chain is Cilia- and flagella-associated protein 45 from Chlamydomonas reinhardtii (Chlamydomonas smithii).